The sequence spans 150 residues: Large ribosomal subunit protein bL9 (150 aa).

Belongs to the bacterial ribosomal protein bL9 family.

Its function is as follows. Binds to the 23S rRNA. This is Large ribosomal subunit protein bL9 from Streptococcus sanguinis (strain SK36).